Here is a 284-residue protein sequence, read N- to C-terminus: 2-dehydro-3-deoxyphosphooctonate aldolase (284 aa).

This sequence belongs to the KdsA family.

Its subcellular location is the cytoplasm. The catalysed reaction is D-arabinose 5-phosphate + phosphoenolpyruvate + H2O = 3-deoxy-alpha-D-manno-2-octulosonate-8-phosphate + phosphate. The protein operates within carbohydrate biosynthesis; 3-deoxy-D-manno-octulosonate biosynthesis; 3-deoxy-D-manno-octulosonate from D-ribulose 5-phosphate: step 2/3. It participates in bacterial outer membrane biogenesis; lipopolysaccharide biosynthesis. The protein is 2-dehydro-3-deoxyphosphooctonate aldolase of Bordetella petrii (strain ATCC BAA-461 / DSM 12804 / CCUG 43448).